The primary structure comprises 284 residues: Putative ABC transporter ATP-binding protein PH1815 (284 aa).

Positions 4–244 constitute an ABC transporter domain; the sequence is IEVEDVSFRY…VEFLRTIGVK (241 aa). An ATP-binding site is contributed by 38–45; the sequence is GPSGSGKS.

The protein belongs to the ABC transporter superfamily.

It localises to the cell membrane. Its function is as follows. Probably part of an ABC transporter complex. Responsible for energy coupling to the transport system. This is Putative ABC transporter ATP-binding protein PH1815 from Pyrococcus horikoshii (strain ATCC 700860 / DSM 12428 / JCM 9974 / NBRC 100139 / OT-3).